The following is a 490-amino-acid chain: Acetyl-coenzyme A carboxylase carboxyl transferase subunit beta, chloroplastic (490 aa).

The segment at 184 to 203 (LNSSENEGSSRRTRTKGSDL) is disordered. Residues 221–490 (LWVQCENCYG…PLNQKSSKIK (270 aa)) form the CoA carboxyltransferase N-terminal domain. Zn(2+)-binding residues include C225, C228, C244, and C247. The segment at 225–247 (CENCYGLNYKKFLKSKMNICEQC) adopts a C4-type zinc-finger fold.

It belongs to the AccD/PCCB family. As to quaternary structure, acetyl-CoA carboxylase is a heterohexamer composed of biotin carboxyl carrier protein, biotin carboxylase and 2 subunits each of ACCase subunit alpha and ACCase plastid-coded subunit beta (accD). The cofactor is Zn(2+).

It localises to the plastid. The protein resides in the chloroplast stroma. The catalysed reaction is N(6)-carboxybiotinyl-L-lysyl-[protein] + acetyl-CoA = N(6)-biotinyl-L-lysyl-[protein] + malonyl-CoA. Its pathway is lipid metabolism; malonyl-CoA biosynthesis; malonyl-CoA from acetyl-CoA: step 1/1. Its function is as follows. Component of the acetyl coenzyme A carboxylase (ACC) complex. Biotin carboxylase (BC) catalyzes the carboxylation of biotin on its carrier protein (BCCP) and then the CO(2) group is transferred by the transcarboxylase to acetyl-CoA to form malonyl-CoA. This Solanum bulbocastanum (Wild potato) protein is Acetyl-coenzyme A carboxylase carboxyl transferase subunit beta, chloroplastic.